Here is a 495-residue protein sequence, read N- to C-terminus: Protein nucleotidyltransferase YdiU (495 aa).

8 residues coordinate ATP: glycine 92, glycine 94, arginine 95, lysine 114, aspartate 126, glycine 127, arginine 177, and arginine 184. Catalysis depends on aspartate 261, which acts as the Proton acceptor. Mg(2+) contacts are provided by asparagine 262 and aspartate 271. ATP is bound at residue aspartate 271.

The protein belongs to the SELO family. It depends on Mg(2+) as a cofactor. The cofactor is Mn(2+).

The catalysed reaction is L-seryl-[protein] + ATP = 3-O-(5'-adenylyl)-L-seryl-[protein] + diphosphate. It carries out the reaction L-threonyl-[protein] + ATP = 3-O-(5'-adenylyl)-L-threonyl-[protein] + diphosphate. It catalyses the reaction L-tyrosyl-[protein] + ATP = O-(5'-adenylyl)-L-tyrosyl-[protein] + diphosphate. The enzyme catalyses L-histidyl-[protein] + UTP = N(tele)-(5'-uridylyl)-L-histidyl-[protein] + diphosphate. The catalysed reaction is L-seryl-[protein] + UTP = O-(5'-uridylyl)-L-seryl-[protein] + diphosphate. It carries out the reaction L-tyrosyl-[protein] + UTP = O-(5'-uridylyl)-L-tyrosyl-[protein] + diphosphate. In terms of biological role, nucleotidyltransferase involved in the post-translational modification of proteins. It can catalyze the addition of adenosine monophosphate (AMP) or uridine monophosphate (UMP) to a protein, resulting in modifications known as AMPylation and UMPylation. In Bordetella bronchiseptica (strain ATCC BAA-588 / NCTC 13252 / RB50) (Alcaligenes bronchisepticus), this protein is Protein nucleotidyltransferase YdiU.